A 193-amino-acid polypeptide reads, in one-letter code: ATP-dependent Clp protease proteolytic subunit 1 (193 aa).

The active-site Nucleophile is serine 98. Residue histidine 123 is part of the active site.

This sequence belongs to the peptidase S14 family. As to quaternary structure, fourteen ClpP subunits assemble into 2 heptameric rings which stack back to back to give a disk-like structure with a central cavity, resembling the structure of eukaryotic proteasomes.

It localises to the cytoplasm. The enzyme catalyses Hydrolysis of proteins to small peptides in the presence of ATP and magnesium. alpha-casein is the usual test substrate. In the absence of ATP, only oligopeptides shorter than five residues are hydrolyzed (such as succinyl-Leu-Tyr-|-NHMec, and Leu-Tyr-Leu-|-Tyr-Trp, in which cleavage of the -Tyr-|-Leu- and -Tyr-|-Trp bonds also occurs).. Functionally, cleaves peptides in various proteins in a process that requires ATP hydrolysis. Has a chymotrypsin-like activity. Plays a major role in the degradation of misfolded proteins. The protein is ATP-dependent Clp protease proteolytic subunit 1 of Bacillus cereus (strain ZK / E33L).